The following is a 314-amino-acid chain: 4-hydroxy-3-methylbut-2-enyl diphosphate reductase (314 aa).

Position 12 (Cys-12) interacts with [4Fe-4S] cluster. (2E)-4-hydroxy-3-methylbut-2-enyl diphosphate contacts are provided by His-43 and His-81. Residues His-43 and His-81 each contribute to the dimethylallyl diphosphate site. His-43 and His-81 together coordinate isopentenyl diphosphate. Cys-103 provides a ligand contact to [4Fe-4S] cluster. His-131 contacts (2E)-4-hydroxy-3-methylbut-2-enyl diphosphate. Residue His-131 participates in dimethylallyl diphosphate binding. His-131 serves as a coordination point for isopentenyl diphosphate. The active-site Proton donor is the Glu-133. (2E)-4-hydroxy-3-methylbut-2-enyl diphosphate is bound at residue Thr-170. Cys-198 is a [4Fe-4S] cluster binding site. Residues Ser-226, Asn-228, and Ser-271 each coordinate (2E)-4-hydroxy-3-methylbut-2-enyl diphosphate. Residues Ser-226, Asn-228, and Ser-271 each coordinate dimethylallyl diphosphate. Residues Ser-226, Asn-228, and Ser-271 each contribute to the isopentenyl diphosphate site.

It belongs to the IspH family. Requires [4Fe-4S] cluster as cofactor.

It carries out the reaction isopentenyl diphosphate + 2 oxidized [2Fe-2S]-[ferredoxin] + H2O = (2E)-4-hydroxy-3-methylbut-2-enyl diphosphate + 2 reduced [2Fe-2S]-[ferredoxin] + 2 H(+). The catalysed reaction is dimethylallyl diphosphate + 2 oxidized [2Fe-2S]-[ferredoxin] + H2O = (2E)-4-hydroxy-3-methylbut-2-enyl diphosphate + 2 reduced [2Fe-2S]-[ferredoxin] + 2 H(+). The protein operates within isoprenoid biosynthesis; dimethylallyl diphosphate biosynthesis; dimethylallyl diphosphate from (2E)-4-hydroxy-3-methylbutenyl diphosphate: step 1/1. It functions in the pathway isoprenoid biosynthesis; isopentenyl diphosphate biosynthesis via DXP pathway; isopentenyl diphosphate from 1-deoxy-D-xylulose 5-phosphate: step 6/6. Functionally, catalyzes the conversion of 1-hydroxy-2-methyl-2-(E)-butenyl 4-diphosphate (HMBPP) into a mixture of isopentenyl diphosphate (IPP) and dimethylallyl diphosphate (DMAPP). Acts in the terminal step of the DOXP/MEP pathway for isoprenoid precursor biosynthesis. This is 4-hydroxy-3-methylbut-2-enyl diphosphate reductase from Bacillus velezensis (strain DSM 23117 / BGSC 10A6 / LMG 26770 / FZB42) (Bacillus amyloliquefaciens subsp. plantarum).